Here is a 309-residue protein sequence, read N- to C-terminus: Porphobilinogen deaminase (309 aa).

S-(dipyrrolylmethanemethyl)cysteine is present on Cys-243.

The protein belongs to the HMBS family. Monomer. Dipyrromethane is required as a cofactor.

The catalysed reaction is 4 porphobilinogen + H2O = hydroxymethylbilane + 4 NH4(+). Its pathway is porphyrin-containing compound metabolism; protoporphyrin-IX biosynthesis; coproporphyrinogen-III from 5-aminolevulinate: step 2/4. Functionally, tetrapolymerization of the monopyrrole PBG into the hydroxymethylbilane pre-uroporphyrinogen in several discrete steps. The protein is Porphobilinogen deaminase (hemC) of Deinococcus radiodurans (strain ATCC 13939 / DSM 20539 / JCM 16871 / CCUG 27074 / LMG 4051 / NBRC 15346 / NCIMB 9279 / VKM B-1422 / R1).